The sequence spans 313 residues: D-alanine--D-alanine ligase (313 aa).

The 201-residue stretch at 108 to 308 (KLVWQQTGVP…YSELVVKVLS (201 aa)) folds into the ATP-grasp domain. 138-193 (VAKLGLPLFVKPASEGSSVAVLKVKTADALPAALAEAATHDKIVIVEKSIEGGGEY) is a binding site for ATP. Residues Asp262, Glu275, and Asn277 each coordinate Mg(2+).

The protein belongs to the D-alanine--D-alanine ligase family. The cofactor is Mg(2+). It depends on Mn(2+) as a cofactor.

It localises to the cytoplasm. The catalysed reaction is 2 D-alanine + ATP = D-alanyl-D-alanine + ADP + phosphate + H(+). It participates in cell wall biogenesis; peptidoglycan biosynthesis. Functionally, cell wall formation. This Burkholderia multivorans (strain ATCC 17616 / 249) protein is D-alanine--D-alanine ligase.